A 122-amino-acid chain; its full sequence is MVSFMTRLNVADNTGAKQVGIIKVLGSTRKRYAFLGDVVVVSVKDAIPSGMVKKGQVLRAVIVRTKKGQQRKDGTHLKFDDNACVLIKEDKSPRGTRIFGPVARELRERGYNKILSLAVEVV.

Belongs to the universal ribosomal protein uL14 family. As to quaternary structure, part of the 50S ribosomal subunit. Forms a cluster with proteins L3 and L19. In the 70S ribosome, L14 and L19 interact and together make contacts with the 16S rRNA in bridges B5 and B8.

Binds to 23S rRNA. Forms part of two intersubunit bridges in the 70S ribosome. This is Large ribosomal subunit protein uL14 from Mycoplasma pneumoniae (strain ATCC 29342 / M129 / Subtype 1) (Mycoplasmoides pneumoniae).